Reading from the N-terminus, the 326-residue chain is tRNA-modifying protein YgfZ (326 aa).

Folate is bound by residues Trp27 and Trp189.

The protein belongs to the tRNA-modifying YgfZ family.

It is found in the cytoplasm. Folate-binding protein involved in regulating the level of ATP-DnaA and in the modification of some tRNAs. It is probably a key factor in regulatory networks that act via tRNA modification, such as initiation of chromosomal replication. In Enterobacter sp. (strain 638), this protein is tRNA-modifying protein YgfZ.